A 1371-amino-acid polypeptide reads, in one-letter code: Serine protease pic autotransporter (1371 aa).

An N-terminal signal peptide occupies residues 1-55 (MNKVYSLKYCPVTGGLIVVSELASRVIKKTCRRLTHILLAGIPAVYLYYPQISQA). The Peptidase S6 domain maps to 56–301 (GIVRSDIAYQ…NVIPTDYLNQ (246 aa)). Catalysis depends on charge relay system residues His127, Asp155, and Ser258. One can recognise an Autotransporter domain in the interval 1105–1371 (DTNGDAGAWA…AVNANFRYMF (267 aa)).

Cleaved to release the mature protein from the outer membrane.

The protein resides in the periplasm. It localises to the secreted. It is found in the cell surface. The protein localises to the cell outer membrane. Involved in virulence of uropathogenic E.coli although it is not known how it contributes to it. Has no mucinase activity. The polypeptide is Serine protease pic autotransporter (pic) (Escherichia coli O6:H1 (strain CFT073 / ATCC 700928 / UPEC)).